Here is a 407-residue protein sequence, read N- to C-terminus: Na(+)-translocating NADH-quinone reductase subunit F (407 aa).

The chain crosses the membrane as a helical span at residues 3–23 (IILGVVMFTLIVLALTVMILF). The region spanning 32–126 (GDITVEINED…NLKIELPEEI (95 aa)) is the 2Fe-2S ferredoxin-type domain. Residues cysteine 69, cysteine 75, cysteine 78, and cysteine 110 each contribute to the [2Fe-2S] cluster site. The FAD-binding FR-type domain occupies 129-269 (VKKWTCEVIS…SGPFGEFFAK (141 aa)).

This sequence belongs to the NqrF family. In terms of assembly, composed of six subunits; NqrA, NqrB, NqrC, NqrD, NqrE and NqrF. [2Fe-2S] cluster serves as cofactor. Requires FAD as cofactor.

The protein localises to the cell inner membrane. The catalysed reaction is a ubiquinone + n Na(+)(in) + NADH + H(+) = a ubiquinol + n Na(+)(out) + NAD(+). Its function is as follows. NQR complex catalyzes the reduction of ubiquinone-1 to ubiquinol by two successive reactions, coupled with the transport of Na(+) ions from the cytoplasm to the periplasm. The first step is catalyzed by NqrF, which accepts electrons from NADH and reduces ubiquinone-1 to ubisemiquinone by a one-electron transfer pathway. The polypeptide is Na(+)-translocating NADH-quinone reductase subunit F (Yersinia pseudotuberculosis serotype I (strain IP32953)).